The following is a 737-amino-acid chain: Catalase-peroxidase (737 aa).

A cross-link (tryptophyl-tyrosyl-methioninium (Trp-Tyr) (with M-245)) is located at residues 89-219; that stretch reads WHSAGTYRVF…LAASHMGLIY (131 aa). His-90 (proton acceptor) is an active-site residue. The segment at residues 219–245 is a cross-link (tryptophyl-tyrosyl-methioninium (Tyr-Met) (with W-89)); sequence YVNPEGPNGNPDPKAAARDIRVTFGRM. His-260 contributes to the heme b binding site.

It belongs to the peroxidase family. Peroxidase/catalase subfamily. Homodimer or homotetramer. Requires heme b as cofactor. In terms of processing, formation of the three residue Trp-Tyr-Met cross-link is important for the catalase, but not the peroxidase activity of the enzyme.

It localises to the cytoplasm. The enzyme catalyses H2O2 + AH2 = A + 2 H2O. It carries out the reaction 2 H2O2 = O2 + 2 H2O. In terms of biological role, bifunctional enzyme with both catalase and broad-spectrum peroxidase activity. The protein is Catalase-peroxidase of Aspergillus terreus (strain NIH 2624 / FGSC A1156).